The sequence spans 62 residues: Alpha-lytic protease L1 (62 aa).

The active-site Charge relay system is the serine 48.

The protein belongs to the peptidase S1 family. Monomer.

The protein localises to the secreted. The enzyme catalyses Preferential cleavage: Ala-|-Xaa, Val-|-Xaa in bacterial cell walls, elastin and other proteins.. Its activity is regulated as follows. Inhibited by phenylmethanesulfonyl fluoride (PMSF) and p-chloromercuribenzoate (PCMB). In terms of biological role, has bacteriolytic activity. This chain is Alpha-lytic protease L1, found in Lysobacter sp. (strain XL1).